The chain runs to 340 residues: GTP 3',8-cyclase (340 aa).

The Radical SAM core domain maps to 8 to 227 (KLGRPIRDLR…TMIEQHFEID (220 aa)). Arginine 17 lines the GTP pocket. Residues cysteine 24 and cysteine 28 each contribute to the [4Fe-4S] cluster site. Residue tyrosine 30 participates in S-adenosyl-L-methionine binding. Cysteine 31 provides a ligand contact to [4Fe-4S] cluster. A GTP-binding site is contributed by arginine 71. Position 75 (glycine 75) interacts with S-adenosyl-L-methionine. GTP is bound at residue threonine 102. Position 126 (serine 126) interacts with S-adenosyl-L-methionine. GTP is bound at residue lysine 163. Position 197 (methionine 197) interacts with S-adenosyl-L-methionine. [4Fe-4S] cluster is bound by residues cysteine 261 and cysteine 264. 266–268 (RAR) is a binding site for GTP. Cysteine 278 is a binding site for [4Fe-4S] cluster.

Belongs to the radical SAM superfamily. MoaA family. As to quaternary structure, monomer and homodimer. It depends on [4Fe-4S] cluster as a cofactor.

It catalyses the reaction GTP + AH2 + S-adenosyl-L-methionine = (8S)-3',8-cyclo-7,8-dihydroguanosine 5'-triphosphate + 5'-deoxyadenosine + L-methionine + A + H(+). It functions in the pathway cofactor biosynthesis; molybdopterin biosynthesis. In terms of biological role, catalyzes the cyclization of GTP to (8S)-3',8-cyclo-7,8-dihydroguanosine 5'-triphosphate. The polypeptide is GTP 3',8-cyclase (Staphylococcus aureus (strain MRSA252)).